The sequence spans 840 residues: Phosphatidylglycerol lysyltransferase (840 aa).

The Cytoplasmic segment spans residues 1–8 (MNQEVKNK). A helical membrane pass occupies residues 9 to 29 (IFSILKITFATALFIFVAITL). Topologically, residues 30 to 52 (YRELSGINFKDTLVEFSKINRMS) are extracellular. Residues 53–73 (LVLLFIGGGASLVILSMYDVI) form a helical membrane-spanning segment. The Cytoplasmic portion of the chain corresponds to 74-89 (LSRALKMDISLGKVLR). A helical transmembrane segment spans residues 90 to 110 (VSYIINALNAIVGFGGFIGAG). Over 111–128 (VRAMVYKNYTHDKKKLVH) the chain is Extracellular. The chain crosses the membrane as a helical span at residues 129–149 (FISLILISMLTGLSLLSLLIV). At 150-161 (FHVFDASLILDK) the chain is on the cytoplasmic side. A helical transmembrane segment spans residues 162–182 (ITWVRWVLYVVSFFLPLFIIY). The Extracellular segment spans residues 183–200 (SMVRPPDKNNRFVGLYCT). The helical transmembrane segment at 201 to 221 (LVSCVEWLAAAVVLYFCGVIV) threads the bilayer. Residues 222-229 (DAHVSFMS) are Cytoplasmic-facing. A helical transmembrane segment spans residues 230-250 (FIAIFIIAALSGLVSFIPGGF). Over 251 to 271 (GAFDLVVLLGFKTLGVPEEKV) the chain is Extracellular. The chain crosses the membrane as a helical span at residues 272-292 (LLMLLLYRFAYYFVPVIIALI). At 293-337 (LSSFEFGTSAKKYIEGSKYFIPAKDVTSFLMSYQKDIIAKIPSLS) the chain is on the cytoplasmic side. The chain crosses the membrane as a helical span at residues 338–358 (LAILVFFTSMIFFVNNLTIVY). Residues 359-369 (DALYDGNHLTY) lie on the Extracellular side of the membrane. Residues 370–390 (YILLAIHTSACLLLLLNVVGI) traverse the membrane as a helical segment. Topologically, residues 391-394 (YKQS) are cytoplasmic. Helical transmembrane passes span 395-415 (RRAI…TFFT) and 416-436 (YASY…IVAF). The Cytoplasmic segment spans residues 437-450 (RRARRLKRPVRMRN). The chain crosses the membrane as a helical span at residues 451–471 (IVAMLLFSLFILYVNHIFIAG). The Extracellular portion of the chain corresponds to 472–489 (TLYALDIYTIEMHTSVLR). Residues 490–510 (YYFWLTILIIAIIIGMIAWLF) form a helical membrane-spanning segment. Topologically, residues 511–840 (DYQFSKVRIS…SKVMRVIRHK (330 aa)) are cytoplasmic.

The protein belongs to the LPG synthase family.

It is found in the cell membrane. It catalyses the reaction L-lysyl-tRNA(Lys) + a 1,2-diacyl-sn-glycero-3-phospho-(1'-sn-glycerol) = a 1,2-diacyl-sn-glycero-3-phospho-1'-(3'-O-L-lysyl)-sn-glycerol + tRNA(Lys). In terms of biological role, catalyzes the transfer of a lysyl group from L-lysyl-tRNA(Lys) to membrane-bound phosphatidylglycerol (PG), which produces lysylphosphatidylglycerol (LPG), a major component of the bacterial membrane with a positive net charge. LPG synthesis contributes to bacterial virulence as it is involved in the resistance mechanism against cationic antimicrobial peptides (CAMP) produces by the host's immune system (defensins, cathelicidins) and by the competing microorganisms (bacteriocins). In fact, the modification of anionic phosphatidylglycerol with positively charged L-lysine results in repulsion of the peptides. The polypeptide is Phosphatidylglycerol lysyltransferase (mprF) (Staphylococcus aureus (strain COL)).